Here is a 215-residue protein sequence, read N- to C-terminus: Large ribosomal subunit protein uL4 (215 aa).

Residues 46–72 (TAKSKNRAEVSGGGRKPWAQKGGGRAR) form a disordered region. Gly residues predominate over residues 56–71 (SGGGRKPWAQKGGGRA).

This sequence belongs to the universal ribosomal protein uL4 family. In terms of assembly, part of the 50S ribosomal subunit.

Functionally, one of the primary rRNA binding proteins, this protein initially binds near the 5'-end of the 23S rRNA. It is important during the early stages of 50S assembly. It makes multiple contacts with different domains of the 23S rRNA in the assembled 50S subunit and ribosome. Its function is as follows. Forms part of the polypeptide exit tunnel. This is Large ribosomal subunit protein uL4 from Helicobacter pylori (strain ATCC 700392 / 26695) (Campylobacter pylori).